A 383-amino-acid polypeptide reads, in one-letter code: Putative glutamate--cysteine ligase 2-1 (383 aa).

This sequence belongs to the glutamate--cysteine ligase type 2 family. YbdK subfamily.

The catalysed reaction is L-cysteine + L-glutamate + ATP = gamma-L-glutamyl-L-cysteine + ADP + phosphate + H(+). Its function is as follows. ATP-dependent carboxylate-amine ligase which exhibits weak glutamate--cysteine ligase activity. This is Putative glutamate--cysteine ligase 2-1 from Nocardia farcinica (strain IFM 10152).